The primary structure comprises 936 residues: MALSRRDFLKSSAAAAAASAVGLSVPKEVEAASKEAQKGWRWDKAVCRFCGTGCGIMIATKDDRIVAVKGDPLAPVNRGLNCIKGYFTAKIMYGADRLKTPLLRMNDKGEFDKKGKFRPVSWKRAFDEMEKQFRKAYNELGPTGVAFFGSGQYTVMEGYAAAKLMKAGFRSNNIDPNARHCMASAVAGFIQTFGIDEPAGCYDDIELTDTIVLWGSNMAEMHPILWARCTDRKLSDPNKVKVVVLSTYTHRSCDLADDVIIFKPNTDLAIWNYIARSIVYDHPDAIDWNFVKEYCVFATGYPDIGYGMRNPKRAEELGYSKKEMQTVWHQDHKKLSEDEKRALAPFGYGNADVMKMKHVKAAGKHWAISFEEFKKSLEPYTLDYVAKVAKGDPDESLESFKAKLQRLKDLYVEKGRKVVSFWTMGMNQHTRGTWDNELSYVVHFLLGKQALPGSGAFSLTGQPSACGTAREVGTFAHRLPADMVVFNPKHRAIAEKIWKLPKGTINPKVGSHIVKIMRDLEDGKIKFAWVHVCNPWQDTANANHWIKAARDMDNFIVVSDGYPGISAKVADLILPSAMIYEKWGAYGNAERRTQHWRQQVTPVGDAMPDIWQYTEFAKRFKLKDVWKEWKLPDGTVLPNVLDEAKKMGYSEDDTLFDVLFANDYYRSFKWPDPIGEGFLNTEAEGDKRNVIGADGKPWKGYGFFIQKALWEEYRKFGEGRGHDYAPFDVYHKVRGLRWPVVNGKDTPWRFNVNYDPYAKREKELGHVKGEFAFYGHALKVIPQGSLTGPDKNKPKIHLPNKAKIFARPYMEPPEVPDNEYDTWLCTGRVLEHWHSGTMTMRVPELYRAVPEALCYMHPEDAKKRGVKRGDLVVIESRRGKCKARVETRGRNRPPRGLVFVPWFDERVYINLVTLDATCPISKQTDYKKCAVKIYKA.

Residues 1–31 (MALSRRDFLKSSAAAAAASAVGLSVPKEVEA) constitute a signal peptide (tat-type signal). The 4Fe-4S Mo/W bis-MGD-type domain maps to 40-96 (WRWDKAVCRFCGTGCGIMIATKDDRIVAVKGDPLAPVNRGLNCIKGYFTAKIMYGAD). The [4Fe-4S] cluster site is built by C47, C50, C54, and C82. Residues K84, Q152, N177, C181, 214 to 221 (WGSNMAEM), 246 to 250 (STYTH), M424, Q428, N534, 559 to 560 (SD), K582, D609, and 826 to 835 (TGRVLEHWHS) contribute to the Mo-bis(molybdopterin guanine dinucleotide) site. W902 provides a ligand contact to substrate. Mo-bis(molybdopterin guanine dinucleotide) contacts are provided by N910 and K927.

Belongs to the prokaryotic molybdopterin-containing oxidoreductase family. NasA/NapA/NarB subfamily. In terms of assembly, component of the periplasmic nitrate reductase NapAB complex composed of NapA and NapB. The cofactor is [4Fe-4S] cluster. Mo-bis(molybdopterin guanine dinucleotide) serves as cofactor. Post-translationally, predicted to be exported by the Tat system. The position of the signal peptide cleavage has not been experimentally proven.

The protein localises to the periplasm. It carries out the reaction 2 Fe(II)-[cytochrome] + nitrate + 2 H(+) = 2 Fe(III)-[cytochrome] + nitrite + H2O. In terms of biological role, catalytic subunit of the periplasmic nitrate reductase complex NapAB. Receives electrons from NapB and catalyzes the reduction of nitrate to nitrite. The chain is Periplasmic nitrate reductase from Nitratiruptor sp. (strain SB155-2).